Here is a 762-residue protein sequence, read N- to C-terminus: Poly(A) RNA polymerase CID14 (762 aa).

Residues 1 to 123 (MPTGFQPAES…KKEEQKAAER (123 aa)) form a disordered region. A compositionally biased stretch (basic residues) spans 50-62 (KKNKKDKKKKGSK). 2 stretches are compositionally biased toward basic and acidic residues: residues 65 to 75 (QPVDEPDKKDG) and 99 to 123 (RKRD…AAER). Ser189 serves as a coordination point for ATP. The Mg(2+) site is built by Asp200 and Asp202. The ATP site is built by Gly266, Lys291, Ser309, and Tyr310. The PAP-associated domain maps to 336 to 393 (NLGTLLIEFFELFGRNFNYNDVGISIRRGGFYFSKASRGWMKGQSFLLSIEDPQDKDN). The interval 482–762 (SIPLGADPKP…LGQSSGDMSD (281 aa)) is disordered. Positions 536 to 549 (VEDDELESDDDSDS) are enriched in acidic residues. Residues 572–581 (RTANSRSTSR) are compositionally biased toward polar residues. ATP is bound at residue Lys610. Acidic residues-rich tracts occupy residues 677–687 (GEEEEEIDSDE) and 697–707 (SDGDLGSEDEI). The span at 753–762 (LGQSSGDMSD) shows a compositional bias: polar residues.

It belongs to the DNA polymerase type-B-like family. Component of the TRAMP complex. It depends on Mg(2+) as a cofactor. Requires Mn(2+) as cofactor.

The protein resides in the nucleus. The protein localises to the nucleolus. It catalyses the reaction RNA(n) + ATP = RNA(n)-3'-adenine ribonucleotide + diphosphate. In terms of biological role, required for 3' polyadenylation of the 5.8S and 25S rRNAs as a prelude to their degradation in the exosome. Involved in the nucleolar organization to ensure faithful chromosome segregation during mitosis. The protein is Poly(A) RNA polymerase CID14 of Cryptococcus neoformans var. neoformans serotype D (strain JEC21 / ATCC MYA-565) (Filobasidiella neoformans).